A 282-amino-acid chain; its full sequence is Elongation factor Ts (282 aa).

The tract at residues 80-83 (TDFV) is involved in Mg(2+) ion dislocation from EF-Tu.

Belongs to the EF-Ts family.

The protein resides in the cytoplasm. In terms of biological role, associates with the EF-Tu.GDP complex and induces the exchange of GDP to GTP. It remains bound to the aminoacyl-tRNA.EF-Tu.GTP complex up to the GTP hydrolysis stage on the ribosome. The polypeptide is Elongation factor Ts (Chlamydia felis (strain Fe/C-56) (Chlamydophila felis)).